A 145-amino-acid chain; its full sequence is Putative pre-16S rRNA nuclease (145 aa).

This sequence belongs to the YqgF nuclease family.

The protein localises to the cytoplasm. Could be a nuclease involved in processing of the 5'-end of pre-16S rRNA. This chain is Putative pre-16S rRNA nuclease, found in Sulfurihydrogenibium sp. (strain YO3AOP1).